A 407-amino-acid polypeptide reads, in one-letter code: Tryptophan synthase beta chain (407 aa).

Polar residues predominate over residues 1-11 (MSTAPSQQHAS). A disordered region spans residues 1–25 (MSTAPSQQHASAQVPDPRGRFGDFG). Lys-100 carries the N6-(pyridoxal phosphate)lysine modification.

The protein belongs to the TrpB family. Tetramer of two alpha and two beta chains. Pyridoxal 5'-phosphate serves as cofactor.

The catalysed reaction is (1S,2R)-1-C-(indol-3-yl)glycerol 3-phosphate + L-serine = D-glyceraldehyde 3-phosphate + L-tryptophan + H2O. It functions in the pathway amino-acid biosynthesis; L-tryptophan biosynthesis; L-tryptophan from chorismate: step 5/5. The beta subunit is responsible for the synthesis of L-tryptophan from indole and L-serine. This Rhodopirellula baltica (strain DSM 10527 / NCIMB 13988 / SH1) protein is Tryptophan synthase beta chain.